The sequence spans 88 residues: MALKERVGTVVSDKMDKTVVVAVENRFPHPIYQKTVSRTTRYKAHDEDNACRVGDRVRITETRPLSRHKRWAIAEVLSQSPKAEEVTK.

Belongs to the universal ribosomal protein uS17 family. In terms of assembly, part of the 30S ribosomal subunit.

In terms of biological role, one of the primary rRNA binding proteins, it binds specifically to the 5'-end of 16S ribosomal RNA. The polypeptide is Small ribosomal subunit protein uS17 (Synechococcus sp. (strain CC9311)).